The chain runs to 355 residues: 6-aminohexanoate-oligomer endohydrolase (355 aa).

Catalysis depends on T267, which acts as the Nucleophile.

It belongs to the peptidase S58 family. In terms of assembly, heterotetramer composed of 4 alpha/beta heterodimers. In terms of processing, expressed as an inactive precursor that is cleaved autocatalytically at Asn266/Thr267 to generate an active enzyme composed of an alpha subunit and a beta subunit.

The catalysed reaction is [N-(6-aminohexanoyl)]n + H2O = [N-(6-aminohexanoyl)]n-x + [N-(6-aminohexanoyl)]x.. Its pathway is xenobiotic degradation; nylon-6 oligomer degradation. In terms of biological role, involved in the degradation of nylon-6 oligomers. Degrades cyclic and linear oligomers of 6-aminohexanoate (Ahx) with a degree of polymerization greater than three by an endo-type mode. Cannot use Ahx cyclic dimer or the Ahx linear dimer. The sequence is that of 6-aminohexanoate-oligomer endohydrolase from Agromyces sp. (strain KY5R).